The sequence spans 314 residues: Olfactory receptor 4Q2 (314 aa).

At 1-26 (MDKNQTEVMREFFLSGFSQTPSIEAG) the chain is on the extracellular side. Asn4 carries an N-linked (GlcNAc...) asparagine glycan. A helical transmembrane segment spans residues 27-47 (LFVLFLFFYMSIWVGNVLIMV). Residues 48 to 61 (TVASDKYLNSSPMY) are Cytoplasmic-facing. A helical membrane pass occupies residues 62-84 (FLLGNLSFLDLCYSTVTTPKLLA). Residues 85-98 (DFFNHEKLISYDQC) are Extracellular-facing. Cys98 and Cys181 are joined by a disulfide. A helical membrane pass occupies residues 99-119 (IVQLFFLHFVGAAEMFLLTVM). Topologically, residues 120–142 (AYDRYVAICRPLHYTTVMSRGLC) are cytoplasmic. The chain crosses the membrane as a helical span at residues 143–163 (CVLVAASWMGGFVHSTVQTIL). Over 164 to 196 (TVHLPFCGPNQVENTFFCDVPPVIKLACADTFV) the chain is Extracellular. Residues 197–217 (IELLMVSNSGLISTISFVVLI) form a helical membrane-spanning segment. Residues 218 to 236 (SSYTTILVKIRSKEGRRKA) are Cytoplasmic-facing. The chain crosses the membrane as a helical span at residues 237-257 (LSTCASHLMVVTLFFGPCIFI). Over 258-268 (YARPFSTFSVD) the chain is Extracellular. Residues 269–289 (KMVSVLYNVITPMLNPLIYTL) form a helical membrane-spanning segment. Residues 290 to 314 (RNKEVKSAMQKLWVRNGLTWKKQET) are Cytoplasmic-facing.

This sequence belongs to the G-protein coupled receptor 1 family.

It is found in the cell membrane. Its function is as follows. Odorant receptor. The protein is Olfactory receptor 4Q2 (OR4Q2) of Homo sapiens (Human).